The sequence spans 64 residues: Beta-defensin 5 (64 aa).

An N-terminal signal peptide occupies residues 1 to 23 (MKIHYLLFAFLLVLLSPLAGVFS). Disulfide bonds link Cys-32-Cys-60, Cys-39-Cys-53, and Cys-43-Cys-61.

This sequence belongs to the beta-defensin family.

It localises to the secreted. Its function is as follows. Has antibacterial activity. The polypeptide is Beta-defensin 5 (Defb5) (Mus musculus (Mouse)).